We begin with the raw amino-acid sequence, 287 residues long: Large ribosomal subunit protein uL2 (287 aa).

A disordered region spans residues 221–287 (RGSVMNPCDH…SKRSRGGRDS (67 aa)). Positions 258–287 (KTRKKNKPSNKLVVRRRRRISKRSRGGRDS) are enriched in basic residues.

Belongs to the universal ribosomal protein uL2 family. As to quaternary structure, part of the 50S ribosomal subunit. Forms a bridge to the 30S subunit in the 70S ribosome.

One of the primary rRNA binding proteins. Required for association of the 30S and 50S subunits to form the 70S ribosome, for tRNA binding and peptide bond formation. It has been suggested to have peptidyltransferase activity; this is somewhat controversial. Makes several contacts with the 16S rRNA in the 70S ribosome. The chain is Large ribosomal subunit protein uL2 from Prochlorococcus marinus (strain MIT 9215).